Here is a 613-residue protein sequence, read N- to C-terminus: Lysophospholipase 1 (613 aa).

The N-terminal stretch at 1 to 21 is a signal peptide; sequence MLFRGLSLWMLFLASCLSALA. The 539-residue stretch at 55–593 folds into the PLA2c domain; it reads DCPSDNIVES…YNYCWSGLYD (539 aa). N-linked (GlcNAc...) asparagine glycans are attached at residues asparagine 142, asparagine 173, asparagine 220, asparagine 244, asparagine 281, asparagine 319, asparagine 348, asparagine 365, asparagine 494, asparagine 499, asparagine 523, asparagine 551, and asparagine 572.

Belongs to the lysophospholipase family.

The protein localises to the secreted. The enzyme catalyses a 1-acyl-sn-glycero-3-phosphocholine + H2O = sn-glycerol 3-phosphocholine + a fatty acid + H(+). Functionally, catalyzes the release of fatty acids from lysophospholipids. Required for survival under high osmolarity, for normal osmotic stress-induced gene expression, and for nutrient-mediated repression of sexual differentiation. In Schizosaccharomyces pombe (strain 972 / ATCC 24843) (Fission yeast), this protein is Lysophospholipase 1 (plb1).